A 230-amino-acid chain; its full sequence is Cytidylate kinase (230 aa).

14–22 (GPSGVGKSS) contributes to the ATP binding site.

It belongs to the cytidylate kinase family. Type 1 subfamily.

The protein resides in the cytoplasm. The catalysed reaction is CMP + ATP = CDP + ADP. The enzyme catalyses dCMP + ATP = dCDP + ADP. This chain is Cytidylate kinase, found in Buchnera aphidicola subsp. Baizongia pistaciae (strain Bp).